Reading from the N-terminus, the 467-residue chain is Methylenetetrahydrofolate--tRNA-(uracil-5-)-methyltransferase TrmFO (467 aa).

11–16 (GAGLAG) contacts FAD.

The protein belongs to the MnmG family. TrmFO subfamily. FAD serves as cofactor.

It localises to the cytoplasm. It catalyses the reaction uridine(54) in tRNA + (6R)-5,10-methylene-5,6,7,8-tetrahydrofolate + NADH + H(+) = 5-methyluridine(54) in tRNA + (6S)-5,6,7,8-tetrahydrofolate + NAD(+). The catalysed reaction is uridine(54) in tRNA + (6R)-5,10-methylene-5,6,7,8-tetrahydrofolate + NADPH + H(+) = 5-methyluridine(54) in tRNA + (6S)-5,6,7,8-tetrahydrofolate + NADP(+). Functionally, catalyzes the folate-dependent formation of 5-methyl-uridine at position 54 (M-5-U54) in all tRNAs. This Prochlorococcus marinus (strain NATL2A) protein is Methylenetetrahydrofolate--tRNA-(uracil-5-)-methyltransferase TrmFO.